The sequence spans 525 residues: M-phase inducer phosphatase 1 (525 aa).

The tract at residues 1–42 is disordered; sequence MELGPEPPHRRRLLFTCSPTPAPQPTGKVQFGASRAGGLSPV. The short motif at 74–84 is the Phosphodegron element; it reads MGSSESTDSGF. Ser76 is modified (phosphoserine; by CHEK1). Phosphoserine; by NEK11 occurs at positions 79, 82, and 88. Ser124 carries the phosphoserine; by CHEK1 and CHEK2 modification. The KEN box signature appears at 141–143; that stretch reads KEN. Ser178 is modified (phosphoserine; by CHEK1). Residues 260–318 form a disordered region; it reads FDSPSPCSSTSSCSTRAVKRADRSHEESPRGTKRRKSSEASPVKADVPEPTQLPHQSLS. A compositionally biased stretch (low complexity) spans 262 to 274; that stretch reads SPSPCSSTSSCST. Residues 278 to 289 are compositionally biased toward basic and acidic residues; the sequence is KRADRSHEESPR. A phosphoserine; by CHEK1 and CHEK2 mark is found at Ser283 and Ser296. In terms of domain architecture, Rhodanese spans 377–483; it reads LIKEFVIIDC…FFLKCQSHCE (107 aa). Cys432 is a catalytic residue. Residue Thr508 is modified to Phosphothreonine; by CHEK1. Phosphoserine; by PLK3 is present on residues Ser514 and Ser520.

Belongs to the MPI phosphatase family. In terms of assembly, interacts with CCNB1/cyclin B1. Interacts with YWHAE/14-3-3 epsilon when phosphorylated. Interacts with CUL1 specifically when CUL1 is neddylated and active. Interacts with BTRC/BTRCP1 and FBXW11/BTRCP2. Interactions with CUL1, BTRC and FBXW11 are enhanced upon DNA damage. Interacts with CHEK2; mediates CDC25A phosphorylation and degradation in response to infrared-induced DNA damages. Interacts with HSP90AB1; prevents heat shock-mediated CDC25A degradation and contributes to cell cycle progression. In terms of processing, phosphorylated by CHEK1 on Ser-76, Ser-124, Ser-178, Ser-283, Ser-296 and Thr-508 during checkpoint mediated cell cycle arrest. Also phosphorylated by CHEK2 on Ser-124, Ser-283, and Ser-296 during checkpoint mediated cell cycle arrest. Phosphorylation on Ser-178 and Thr-508 creates binding sites for YWHAE/14-3-3 epsilon which inhibits CDC25A. Phosphorylation on Ser-76, Ser-124, Ser-178, Ser-283 and Ser-296 may also promote ubiquitin-dependent proteolysis of CDC25A by the SCF complex. Phosphorylation of CDC25A at Ser-76 by CHEK1 primes it for subsequent phosphorylation at Ser-79, Ser-82 and Ser-88 by NEK11. Phosphorylation by NEK11 is required for BTRC-mediated polyubiquitination and degradation. Phosphorylation by PIM1 leads to an increase in phosphatase activity. Phosphorylated by PLK3 following DNA damage, leading to promote its ubiquitination and degradation. Post-translationally, ubiquitinated by the anaphase promoting complex/cyclosome (APC/C) ubiquitin ligase complex that contains FZR1/CDH1 during G1 phase leading to its degradation by the proteasome. Ubiquitinated by a SCF complex containing BTRC and FBXW11 during S phase leading to its degradation by the proteasome. Deubiquitination by USP17L2/DUB3 leads to its stabilization.

It catalyses the reaction O-phospho-L-tyrosyl-[protein] + H2O = L-tyrosyl-[protein] + phosphate. With respect to regulation, stimulated by B-type cyclins. Stimulated by PIM1-mediated phosphorylation. Functionally, tyrosine protein phosphatase which functions as a dosage-dependent inducer of mitotic progression. Directly dephosphorylates CDK1 and stimulates its kinase activity. Also dephosphorylates CDK2 in complex with cyclin-E, in vitro. The sequence is that of M-phase inducer phosphatase 1 (Cdc25a) from Rattus norvegicus (Rat).